The primary structure comprises 299 residues: uncharacterized protein (299 aa).

Residues 25-45 traverse the membrane as a helical segment; sequence LLYFFKSLAMILFFIFFSLTS.

It localises to the membrane. This is an uncharacterized protein from Rickettsia prowazekii (strain Madrid E).